Reading from the N-terminus, the 156-residue chain is Snaclec A5 (156 aa).

The first 23 residues, 1-23, serve as a signal peptide directing secretion; the sequence is MGRSISVSFGLLVVFLSLSGTGA. Disulfide bonds link C27-C38, C55-C154, and C129-C146. A C-type lectin domain is found at 34–155; sequence HEGHCYKVFN…CGKPYRFTCE (122 aa).

It belongs to the snaclec family. As to quaternary structure, heterodimer; disulfide-linked. Expressed by the venom gland.

Its subcellular location is the secreted. Its function is as follows. Interferes with one step of hemostasis (modulation of platelet aggregation, or coagulation cascade, for example). This chain is Snaclec A5, found in Macrovipera lebetinus (Levantine viper).